A 266-amino-acid chain; its full sequence is Proteasome subunit beta type-7 (266 aa).

Positions 1–33 (MNHDPFSWGRPADSTYGAYNTQIANAGASPMVN) are excised as a propeptide.

This sequence belongs to the peptidase T1B family. As to quaternary structure, the 26S proteasome consists of a 20S proteasome core and two 19S regulatory subunits. The 20S proteasome core is composed of 28 subunits that are arranged in four stacked rings, resulting in a barrel-shaped structure. The two end rings are each formed by seven alpha subunits, and the two central rings are each formed by seven beta subunits. The catalytic chamber with the active sites is on the inside of the barrel. Interacts with CIC1.

Its subcellular location is the cytoplasm. The protein resides in the nucleus. Its function is as follows. Non-catalytic component of the proteasome which degrades poly-ubiquitinated proteins in the cytoplasm and in the nucleus. It is essential for the regulated turnover of proteins and for the removal of misfolded proteins. The proteasome is a multicatalytic proteinase complex that is characterized by its ability to cleave peptides with Arg, Phe, Tyr, Leu, and Glu adjacent to the leaving group at neutral or slightly basic pH. It has an ATP-dependent proteolytic activity. PRE3 and PRE4 are necessary for the peptidyl-glutamyl-peptide-hydrolyzing activity. This Saccharomyces cerevisiae (strain ATCC 204508 / S288c) (Baker's yeast) protein is Proteasome subunit beta type-7 (PRE4).